The chain runs to 424 residues: Nuclear hormone receptor family member nhr-55 (424 aa).

The span at 1–19 (MNSPSSSSSFCSSSSSPSS) shows a compositional bias: low complexity. Residues 1 to 20 (MNSPSSSSSFCSSSSSPSSL) are disordered. The segment at residues 25–100 (PDTCQVCGQK…VGMTIENFQF (76 aa)) is a DNA-binding region (nuclear receptor). 2 consecutive NR C4-type zinc fingers follow at residues 28–55 (CQVC…FRRC) and 64–88 (CRRN…LKKC). Residues 169-424 (EVPLHTPNAL…FSHPEVFIDL (256 aa)) form the NR LBD domain.

The protein belongs to the nuclear hormone receptor family.

The protein resides in the nucleus. Its function is as follows. Orphan nuclear receptor. This Caenorhabditis elegans protein is Nuclear hormone receptor family member nhr-55 (nhr-55).